The chain runs to 467 residues: Argininosuccinate lyase (467 aa).

It belongs to the lyase 1 family. Argininosuccinate lyase subfamily.

Its subcellular location is the cytoplasm. The enzyme catalyses 2-(N(omega)-L-arginino)succinate = fumarate + L-arginine. Its pathway is amino-acid biosynthesis; L-arginine biosynthesis; L-arginine from L-ornithine and carbamoyl phosphate: step 3/3. The chain is Argininosuccinate lyase from Rhizobium etli (strain ATCC 51251 / DSM 11541 / JCM 21823 / NBRC 15573 / CFN 42).